A 48-amino-acid chain; its full sequence is Small, acid-soluble spore protein N (48 aa).

A disordered region spans residues Met1–Glu48. The span at Ala23–Asn34 shows a compositional bias: basic residues.

It belongs to the SspN family.

The protein resides in the spore core. The polypeptide is Small, acid-soluble spore protein N (Bacillus pumilus (strain SAFR-032)).